The sequence spans 481 residues: Proline--tRNA ligase (481 aa).

It belongs to the class-II aminoacyl-tRNA synthetase family. ProS type 3 subfamily. As to quaternary structure, homodimer.

It localises to the cytoplasm. The enzyme catalyses tRNA(Pro) + L-proline + ATP = L-prolyl-tRNA(Pro) + AMP + diphosphate. In terms of biological role, catalyzes the attachment of proline to tRNA(Pro) in a two-step reaction: proline is first activated by ATP to form Pro-AMP and then transferred to the acceptor end of tRNA(Pro). The sequence is that of Proline--tRNA ligase from Chlorobium limicola (strain DSM 245 / NBRC 103803 / 6330).